The following is a 294-amino-acid chain: ATP synthase gamma chain (294 aa).

Belongs to the ATPase gamma chain family. F-type ATPases have 2 components, CF(1) - the catalytic core - and CF(0) - the membrane proton channel. CF(1) has five subunits: alpha(3), beta(3), gamma(1), delta(1), epsilon(1). CF(0) has three main subunits: a, b and c.

It localises to the cell inner membrane. Its function is as follows. Produces ATP from ADP in the presence of a proton gradient across the membrane. The gamma chain is believed to be important in regulating ATPase activity and the flow of protons through the CF(0) complex. The polypeptide is ATP synthase gamma chain (Parvibaculum lavamentivorans (strain DS-1 / DSM 13023 / NCIMB 13966)).